Here is a 202-residue protein sequence, read N- to C-terminus: Translation initiation factor 2 subunit beta (202 aa).

Positions 145–202 (AIEEGGTYELRIDAVGSKGDGIAKIDKYTVFVPGATKGDVVKVKIKKISGNLAFSERA) constitute a TRAM domain.

It belongs to the eIF-2-beta/eIF-5 family. In terms of assembly, heterotrimer composed of an alpha, a beta and a gamma chain.

Its function is as follows. eIF-2 functions in the early steps of protein synthesis by forming a ternary complex with GTP and initiator tRNA. In Methanosarcina mazei (strain ATCC BAA-159 / DSM 3647 / Goe1 / Go1 / JCM 11833 / OCM 88) (Methanosarcina frisia), this protein is Translation initiation factor 2 subunit beta (eif2b).